We begin with the raw amino-acid sequence, 337 residues long: Transaldolase (337 aa).

The Nuclear localization signal motif lies at 1–10; it reads MSSSPVKRQR. K115 carries the N6-acetyllysine modification. Residue K142 is the Schiff-base intermediate with substrate of the active site. K219 is modified (N6-acetyllysine). S237 and S256 each carry phosphoserine. K269, K286, and K321 each carry N6-acetyllysine.

This sequence belongs to the transaldolase family. Type 1 subfamily. Homodimer. Heterodimer with isoform 2. Interacts with KPNA1 and KPNA4.

Its subcellular location is the nucleus. It localises to the cytoplasm. It carries out the reaction D-sedoheptulose 7-phosphate + D-glyceraldehyde 3-phosphate = D-erythrose 4-phosphate + beta-D-fructose 6-phosphate. It participates in carbohydrate degradation; pentose phosphate pathway; D-glyceraldehyde 3-phosphate and beta-D-fructose 6-phosphate from D-ribose 5-phosphate and D-xylulose 5-phosphate (non-oxidative stage): step 2/3. Catalyzes the rate-limiting step of the non-oxidative phase in the pentose phosphate pathway. Catalyzes the reversible conversion of sedheptulose-7-phosphate and D-glyceraldehyde 3-phosphate into erythrose-4-phosphate and beta-D-fructose 6-phosphate. Not only acts as a pentose phosphate pathway enzyme, but also affects other metabolite pathways by altering its subcellular localization between the nucleus and the cytoplasm. This is Transaldolase from Homo sapiens (Human).